Reading from the N-terminus, the 350-residue chain is Heat-inducible transcription repressor HrcA (350 aa).

Belongs to the HrcA family.

Functionally, negative regulator of class I heat shock genes (grpE-dnaK-dnaJ and groELS operons). Prevents heat-shock induction of these operons. The sequence is that of Heat-inducible transcription repressor HrcA from Xanthomonas oryzae pv. oryzae (strain KACC10331 / KXO85).